Reading from the N-terminus, the 404-residue chain is Tripartite motif-containing 13 (404 aa).

Residues 10–56 (CPICCCLFEDPRVLPCSHSFCKKCLEGILDGNRSPTWRPPFKCPTCR) form an RING-type zinc finger. Residues 87–129 (PRMSQCRVHSGQPLNIFCATDLKLICGFCATTGDHKGHKFCAL) form a B box-type zinc finger. Zn(2+)-binding residues include C92, H95, C115, and H121. A helical transmembrane segment spans residues 102 to 119 (IFCATDLKLICGFCATTG). Positions 186–236 (KLLRTLEHKRSEILSDLETLKLAVMQTFDPEINRLRSALEEQRRALNIAES) form a coiled coil.

The protein localises to the endoplasmic reticulum membrane. It participates in protein modification; protein ubiquitination. Its function is as follows. E3 ubiquitin ligase involved in the retrotranslocation and turnover of membrane and secretory proteins from the ER through a set of processes named ER-associated degradation (ERAD). This process acts on misfolded proteins as well as in the regulated degradation of correctly folded proteins. The chain is Tripartite motif-containing 13 (trim13) from Danio rerio (Zebrafish).